The chain runs to 344 residues: Dihydroorotase (344 aa).

Zn(2+)-binding residues include His13 and His15. Substrate contacts are provided by residues 15-17 and Asn41; that span reads HFR. Zn(2+) is bound by residues Lys98, His135, and His173. Lys98 bears the N6-carboxylysine mark. Substrate is bound at residue His135. Position 218 (Leu218) interacts with substrate. A Zn(2+)-binding site is contributed by Asp246. Residue Asp246 is part of the active site. Residues His250 and Ala262 each coordinate substrate.

It belongs to the metallo-dependent hydrolases superfamily. DHOase family. Class II DHOase subfamily. As to quaternary structure, homodimer. The cofactor is Zn(2+).

The enzyme catalyses (S)-dihydroorotate + H2O = N-carbamoyl-L-aspartate + H(+). Its pathway is pyrimidine metabolism; UMP biosynthesis via de novo pathway; (S)-dihydroorotate from bicarbonate: step 3/3. Catalyzes the reversible cyclization of carbamoyl aspartate to dihydroorotate. The sequence is that of Dihydroorotase from Shewanella sediminis (strain HAW-EB3).